We begin with the raw amino-acid sequence, 168 residues long: Small ribosomal subunit protein uS5c (168 aa).

The S5 DRBM domain maps to tryptophan 17–valine 80.

The protein belongs to the universal ribosomal protein uS5 family. In terms of assembly, part of the 30S ribosomal subunit. Contacts protein S4.

Its subcellular location is the plastid. It localises to the chloroplast. Its function is as follows. With S4 and S12 plays an important role in translational accuracy. This Rhodomonas salina (Cryptomonas salina) protein is Small ribosomal subunit protein uS5c (rps5).